The sequence spans 384 residues: Acetylornithine aminotransferase (384 aa).

Pyridoxal 5'-phosphate is bound by residues 94–95 and Phe-121; that span reads GT. Arg-124 is a binding site for N(2)-acetyl-L-ornithine. 206–209 provides a ligand contact to pyridoxal 5'-phosphate; sequence DEVQ. Lys-235 is subject to N6-(pyridoxal phosphate)lysine. Ser-263 is a binding site for N(2)-acetyl-L-ornithine. Thr-264 contributes to the pyridoxal 5'-phosphate binding site.

Belongs to the class-III pyridoxal-phosphate-dependent aminotransferase family. ArgD subfamily. As to quaternary structure, homodimer. Pyridoxal 5'-phosphate serves as cofactor.

Its subcellular location is the cytoplasm. The enzyme catalyses N(2)-acetyl-L-ornithine + 2-oxoglutarate = N-acetyl-L-glutamate 5-semialdehyde + L-glutamate. It participates in amino-acid biosynthesis; L-arginine biosynthesis; N(2)-acetyl-L-ornithine from L-glutamate: step 4/4. This Listeria innocua serovar 6a (strain ATCC BAA-680 / CLIP 11262) protein is Acetylornithine aminotransferase.